A 122-amino-acid polypeptide reads, in one-letter code: Large ribosomal subunit protein uL18 (122 aa).

Belongs to the universal ribosomal protein uL18 family. As to quaternary structure, part of the 50S ribosomal subunit; part of the 5S rRNA/L5/L18/L25 subcomplex. Contacts the 5S and 23S rRNAs.

In terms of biological role, this is one of the proteins that bind and probably mediate the attachment of the 5S RNA into the large ribosomal subunit, where it forms part of the central protuberance. In Thermosipho melanesiensis (strain DSM 12029 / CIP 104789 / BI429), this protein is Large ribosomal subunit protein uL18.